A 300-amino-acid chain; its full sequence is Acetaldehyde dehydrogenase 3 (300 aa).

11 to 14 (SGNI) lines the NAD(+) pocket. Cysteine 126 (acyl-thioester intermediate) is an active-site residue. NAD(+)-binding positions include 157–165 (SAGPGTRAN) and asparagine 276.

It belongs to the acetaldehyde dehydrogenase family.

The catalysed reaction is acetaldehyde + NAD(+) + CoA = acetyl-CoA + NADH + H(+). The polypeptide is Acetaldehyde dehydrogenase 3 (Rhodococcus opacus (strain B4)).